Reading from the N-terminus, the 372-residue chain is MFGFEINAHCANTSARCGTFETPHGPVNTPRFMPVGTLATVKGISTEQLGRTGAQMVLSNTYHLHLQPGEEIVAAAGGLHRFMGWNGPMLTDSGGFQVFSLGDLNKIDDRGVVFRNPRDGRTIDMTPEHATQIQMALGADVAMAFDQCPPYPATENDVIDACRRTHAWLERCVTAHTREDQALFGIVQGGCFPHLRRESAMAVASFDLPGTAVGGVSVGEPAEEMHRIVRDVTPLLPSHKPRYLMGIGTLREMAIAVANGIDLFDCVLPTRLGRHGTVLVGGERWNLRNARFRHDHTPLDPSCSCVACTGHTRAYLHHLIRSEELLGLTLLSIHNITQLVRFTSAMAQAIRDGCFSEDFAPWEPDSPAHHTW.

The active-site Proton acceptor is D92. Residues D92–F96, D146, Q188, and G215 each bind substrate. The tract at residues G246–E252 is RNA binding. D265 serves as the catalytic Nucleophile. The interval T270 to R274 is RNA binding; important for wobble base 34 recognition. Zn(2+)-binding residues include C303, C305, C308, and H334.

This sequence belongs to the queuine tRNA-ribosyltransferase family. As to quaternary structure, homodimer. Within each dimer, one monomer is responsible for RNA recognition and catalysis, while the other monomer binds to the replacement base PreQ1. The cofactor is Zn(2+).

The catalysed reaction is 7-aminomethyl-7-carbaguanine + guanosine(34) in tRNA = 7-aminomethyl-7-carbaguanosine(34) in tRNA + guanine. It functions in the pathway tRNA modification; tRNA-queuosine biosynthesis. Functionally, catalyzes the base-exchange of a guanine (G) residue with the queuine precursor 7-aminomethyl-7-deazaguanine (PreQ1) at position 34 (anticodon wobble position) in tRNAs with GU(N) anticodons (tRNA-Asp, -Asn, -His and -Tyr). Catalysis occurs through a double-displacement mechanism. The nucleophile active site attacks the C1' of nucleotide 34 to detach the guanine base from the RNA, forming a covalent enzyme-RNA intermediate. The proton acceptor active site deprotonates the incoming PreQ1, allowing a nucleophilic attack on the C1' of the ribose to form the product. After dissociation, two additional enzymatic reactions on the tRNA convert PreQ1 to queuine (Q), resulting in the hypermodified nucleoside queuosine (7-(((4,5-cis-dihydroxy-2-cyclopenten-1-yl)amino)methyl)-7-deazaguanosine). The chain is Queuine tRNA-ribosyltransferase from Synechococcus sp. (strain CC9605).